Here is a 317-residue protein sequence, read N- to C-terminus: D-alanine--D-alanine ligase (317 aa).

The ATP-grasp domain occupies 111 to 308 (KRFWNGIGIP…YASLVEKIAQ (198 aa)). Residue 137 to 192 (EEQMSYPVIVKPSREGSTIGINKAMNRAELDDALIKALEYDSDILVEEFIDGPEFT) participates in ATP binding. Mg(2+) contacts are provided by Asp-262, Glu-275, and Asn-277.

It belongs to the D-alanine--D-alanine ligase family. Mg(2+) serves as cofactor. Requires Mn(2+) as cofactor.

It is found in the cytoplasm. It catalyses the reaction 2 D-alanine + ATP = D-alanyl-D-alanine + ADP + phosphate + H(+). It participates in cell wall biogenesis; peptidoglycan biosynthesis. Cell wall formation. The chain is D-alanine--D-alanine ligase from Marinomonas sp. (strain MWYL1).